We begin with the raw amino-acid sequence, 161 residues long: MQDAITSVINTADVQGKYLDDSSLNKLKGYFATGELRVRAAATIAANAANIIKESVAKALLYSDITRPGGNMYTTRRFAACIRDLDYYLRLATYGMLAGDPSILDERVLDGLKETYNSLGVPIGATIQAIQAMKEVTSGLLGVDAGQEMALYFDYICSGLS.

N4-methylasparagine is present on N71. Residue C81 participates in (2R,3E)-phycocyanobilin binding.

This sequence belongs to the phycobiliprotein family. Heterodimer of an alpha and a beta chain. In terms of processing, contains one covalently linked phycocyanobilin chromophore.

Its subcellular location is the plastid. The protein resides in the chloroplast thylakoid membrane. In terms of biological role, light-harvesting photosynthetic bile pigment-protein from the phycobiliprotein complex. Allophycocyanin has a maximum absorption at approximately 650 nanometers. The protein is Allophycocyanin beta chain (apcB) of Aglaothamnion neglectum (Red alga).